The primary structure comprises 750 residues: Tyrosine-protein phosphatase 2 (750 aa).

The disordered stretch occupies residues 1-20 (MDRIAQQYRNGKRDNNGNRM). S258 carries the post-translational modification Phosphoserine. Disordered regions lie at residues 327–348 (LHQK…SKLY) and 425–450 (VKLP…DKSY). Polar residues predominate over residues 330-348 (KQLSQKQRGPQSTDDSKLY). The Tyrosine-protein phosphatase domain occupies 383–737 (SPSPLSSDDT…IACYEALLNY (355 aa)). S430 carries the phosphoserine modification. Residue C666 is the Phosphocysteine intermediate of the active site.

This sequence belongs to the protein-tyrosine phosphatase family. Non-receptor class subfamily. In terms of assembly, interacts with HOG1.

It is found in the cytoplasm. The protein localises to the nucleus. It carries out the reaction O-phospho-L-tyrosyl-[protein] + H2O = L-tyrosyl-[protein] + phosphate. Major phosphatase responsible with PTP3 for tyrosine dephosphorylation of MAP kinase HOG1 to inactivate its activity. May also be involved in the regulation of MAP kinase FUS3. May be implicated in the ubiquitin-mediated protein degradation. In Saccharomyces cerevisiae (strain ATCC 204508 / S288c) (Baker's yeast), this protein is Tyrosine-protein phosphatase 2 (PTP2).